A 473-amino-acid polypeptide reads, in one-letter code: Cannabinoid receptor 1 (473 aa).

Residues 1–117 (MKSILDGLAD…CFMILNPSQQ (117 aa)) lie on the Extracellular side of the membrane. The tract at residues 2-23 (KSILDGLADTTFRTITTDLLYV) is required for mitochondrial localization. 2 N-linked (GlcNAc...) asparagine glycosylation sites follow: asparagine 78 and asparagine 84. The chain crosses the membrane as a helical span at residues 118 to 143 (LAIAVLSLTLGTFTVLENLLVLCVIL). Topologically, residues 144–155 (HSRSLRCRPSYH) are cytoplasmic. A helical membrane pass occupies residues 156-176 (FIGSLAVADLLGSVIFVYSFV). At 177–188 (DFHVFHRKDSPN) the chain is on the extracellular side. The helical transmembrane segment at 189 to 213 (VFLFKLGGVTASFTASVGSLFLTAI) threads the bilayer. The Cytoplasmic portion of the chain corresponds to 214-233 (DRYISIHRPLAYKRIVTRPK). A helical transmembrane segment spans residues 234–256 (AVVAFCLMWTIAIVIAVLPLLGW). The Extracellular segment spans residues 257–274 (NCKKLQSVCSDIFPLIDE). The helical transmembrane segment at 275-300 (TYLMFWIGVTSVLLLFIVYAYMYILW) threads the bilayer. Topologically, residues 301-345 (KAHSHAVRMIQRGTQKSIIIHTSEDGKVQVTRPDQARMDIRLAKT) are cytoplasmic. A helical membrane pass occupies residues 346 to 366 (LVLILVVLIICWGPLLAIMVY). Topologically, residues 367 to 378 (DVFGKMNKLIKT) are extracellular. The helical transmembrane segment at 379–400 (VFAFCSMLCLLNSTVNPIIYAL) threads the bilayer. The Cytoplasmic portion of the chain corresponds to 401 to 473 (RSKDLRHAFR…VSTDTSAEAL (73 aa)). Cysteine 416 carries S-palmitoyl cysteine lipidation. Serine 426 and serine 430 each carry phosphoserine.

The protein belongs to the G-protein coupled receptor 1 family. Interacts (via C-terminus) with CNRIP1. Associates with G protein alpha subunits, including G(i) alpha-1/GNAI1, G(i) alpha-3/GNAI3 and G(o)-alpha/GNAO1; palmitoylation is important for interaction with GNAI3 and GNAO1. Palmitoylation at Cys-416 is important for recruitment at both plasma membrane and lipid rafts and association with G protein alpha subunits. As to expression, expressed in the brain, in the striatum, medial septum, descending arm of the band of Broca, the amygdaloid nucleus, the hippocampus and cortex (at protein level). High levels in the lateral striatum. In rostral brain regions, high expression levels in the dorsal lateral striatum, while in the caudal brain regions, high levels are observed in the ventral lateral striatum. Expressed in monocytes/macrophages (at protein level). Expressed in striated muscles and in vascular smooth muscles cells (at protein level).

It is found in the cell membrane. It localises to the mitochondrion outer membrane. Its subcellular location is the cell projection. The protein resides in the axon. The protein localises to the presynapse. Hemopressin, a peptide derived from hemoglobin subunit alpha (HBA1 and/or HBA2), acts as an antagonist peptide: hemopressin-binding efficiently blocks cannabinoid receptor CNR1 and subsequent signaling. G-protein coupled receptor for cannabinoids, including endocannabinoids (eCBs), such as N-arachidonoylethanolamide (also called anandamide or AEA) and 2-arachidonoylglycerol (2-AG). Mediates many cannabinoid-induced effects, acting, among others, on food intake, memory loss, gastrointestinal motility, catalepsy, ambulatory activity, anxiety, chronic pain. Signaling typically involves reduction in cyclic AMP. In the hypothalamus, may have a dual effect on mitochondrial respiration depending upon the agonist dose and possibly upon the cell type. Increases respiration at low doses, while decreases respiration at high doses. At high doses, CNR1 signal transduction involves G-protein alpha-i protein activation and subsequent inhibition of mitochondrial soluble adenylate cyclase, decrease in cyclic AMP concentration, inhibition of protein kinase A (PKA)-dependent phosphorylation of specific subunits of the mitochondrial electron transport system, including NDUFS2. In the hypothalamus, inhibits leptin-induced reactive oxygen species (ROS) formation and mediates cannabinoid-induced increase in SREBF1 and FASN gene expression. In response to cannabinoids, drives the release of orexigenic beta-endorphin, but not that of melanocyte-stimulating hormone alpha/alpha-MSH, from hypothalamic POMC neurons, hence promoting food intake. In the hippocampus, regulates cellular respiration and energy production in response to cannabinoids. Involved in cannabinoid-dependent depolarization-induced suppression of inhibition (DSI), a process in which depolarization of CA1 postsynaptic pyramidal neurons mobilizes eCBs, which retrogradely activate presynaptic CB1 receptors, transiently decreasing GABAergic inhibitory neurotransmission. Also reduces excitatory synaptic transmission. In superior cervical ganglions and cerebral vascular smooth muscle cells, inhibits voltage-gated Ca(2+) channels in a constitutive, as well as agonist-dependent manner. Induces leptin production in adipocytes and reduces LRP2-mediated leptin clearance in the kidney, hence participating in hyperleptinemia. In adipose tissue, CNR1 signaling leads to increased expression of SREBF1, ACACA and FASN genes. In the liver, activation by endocannabinoids leads to increased de novo lipogenesis and reduced fatty acid catabolism, associated with increased expression of SREBF1/SREBP-1, GCK, ACACA, ACACB and FASN genes. May also affect de novo cholesterol synthesis and HDL-cholesteryl ether uptake. Peripherally modulates energy metabolism. In high carbohydrate diet-induced obesity, may decrease the expression of mitochondrial dihydrolipoyl dehydrogenase/DLD in striated muscles, as well as that of selected glucose/ pyruvate metabolic enzymes, hence affecting energy expenditure through mitochondrial metabolism. In response to cannabinoid anandamide, elicits a pro-inflammatory response in macrophages, which involves NLRP3 inflammasome activation and IL1B and IL18 secretion. In macrophages infiltrating pancreatic islets, this process may participate in the progression of type-2 diabetes and associated loss of pancreatic beta-cells. The polypeptide is Cannabinoid receptor 1 (Cnr1) (Rattus norvegicus (Rat)).